Here is a 544-residue protein sequence, read N- to C-terminus: Putative glycerol-3-phosphate transporter 4 (544 aa).

6 helical membrane-spanning segments follow: residues 28-47, 121-141, 156-176, 181-201, 218-238, and 240-260; these read TFRY…YHAS, VAFL…GDSL, FFVG…WFFL, AAGL…GNWF, SVGN…GWGW, and FIAP…FLAA. The segment at 281 to 313 is disordered; that stretch reads KRDVEEEEEEVEEDLGTDVEGDGEGSSGSGSGY. Residues 285–303 show a composition bias toward acidic residues; the sequence is EEEEEEVEEDLGTDVEGDG. 7 helical membrane-spanning segments follow: residues 319–339, 342–362, 371–391, 402–422, 428–448, 471–491, and 494–514; these read VGLL…CLFF, LVAY…TIGG, GNLS…CGYI, AAAF…YGGV, ILLM…ITTA, AIID…TGFL, and LGWQ…GLLL.

The protein belongs to the major facilitator superfamily. Organophosphate:Pi antiporter (OPA) (TC 2.A.1.4) family.

The protein resides in the membrane. The polypeptide is Putative glycerol-3-phosphate transporter 4 (Arabidopsis thaliana (Mouse-ear cress)).